Consider the following 469-residue polypeptide: L-seryl-tRNA(Sec) selenium transferase (469 aa).

Lysine 298 bears the N6-(pyridoxal phosphate)lysine mark.

It belongs to the SelA family. Requires pyridoxal 5'-phosphate as cofactor.

Its subcellular location is the cytoplasm. The enzyme catalyses L-seryl-tRNA(Sec) + selenophosphate + H(+) = L-selenocysteinyl-tRNA(Sec) + phosphate. It functions in the pathway aminoacyl-tRNA biosynthesis; selenocysteinyl-tRNA(Sec) biosynthesis; selenocysteinyl-tRNA(Sec) from L-seryl-tRNA(Sec) (bacterial route): step 1/1. Converts seryl-tRNA(Sec) to selenocysteinyl-tRNA(Sec) required for selenoprotein biosynthesis. This is L-seryl-tRNA(Sec) selenium transferase from Nitratidesulfovibrio vulgaris (strain ATCC 29579 / DSM 644 / CCUG 34227 / NCIMB 8303 / VKM B-1760 / Hildenborough) (Desulfovibrio vulgaris).